The sequence spans 116 residues: Protein Rev (116 aa).

A phosphoserine; by host CK2 mark is found at serine 5 and serine 8. The homomultimerization stretch occupies residues 18-26 (LIKLLYQSN). The disordered stretch occupies residues 21–49 (LLYQSNPPPNPEGTRQARRNRRRRWRERQ). The Nuclear localization signal and RNA-binding (RRE) signature appears at 34-50 (TRQARRNRRRRWRERQR). A compositionally biased stretch (basic residues) spans 36-47 (QARRNRRRRWRE). Positions 73-84 (LQLPPLERLTLD) match the Nuclear export signal and binding to XPO1 motif. Serine 92 and serine 99 each carry phosphoserine; by host. Residues 92–116 (SGTQGVGSPQILVESPTVLESGTKE) form a disordered region.

The protein belongs to the HIV-1 REV protein family. In terms of assembly, homomultimer; when bound to the RRE. Multimeric assembly is essential for activity and may involve XPO1. Binds to human KPNB1, XPO1, TNPO1, RANBP5 and IPO7. Interacts with the viral Integrase. Interacts with human KHDRBS1. Interacts with human NAP1; this interaction decreases Rev multimerization and stimulates its activity. Interacts with human DEAD-box helicases DDX3 and DDX24; these interactions may serve for viral RNA export to the cytoplasm and packaging, respectively. Interacts with human PSIP1; this interaction may inhibit HIV-1 DNA integration by promoting dissociation of the Integrase-LEDGF/p75 complex. Post-translationally, asymmetrically arginine dimethylated at one site by host PRMT6. Methylation impairs the RNA-binding activity and export of viral RNA from the nucleus to the cytoplasm. In terms of processing, phosphorylated by protein kinase CK2. Presence of, and maybe binding to the N-terminus of the regulatory beta subunit of CK2 is necessary for CK2-mediated Rev's phosphorylation.

Its subcellular location is the host nucleus. It localises to the host nucleolus. The protein localises to the host cytoplasm. In terms of biological role, escorts unspliced or incompletely spliced viral pre-mRNAs (late transcripts) out of the nucleus of infected cells. These pre-mRNAs carry a recognition sequence called Rev responsive element (RRE) located in the env gene, that is not present in fully spliced viral mRNAs (early transcripts). This function is essential since most viral proteins are translated from unspliced or partially spliced pre-mRNAs which cannot exit the nucleus by the pathway used by fully processed cellular mRNAs. Rev itself is translated from a fully spliced mRNA that readily exits the nucleus. Rev's nuclear localization signal (NLS) binds directly to KPNB1/Importin beta-1 without previous binding to KPNA1/Importin alpha-1. KPNB1 binds to the GDP bound form of RAN (Ran-GDP) and targets Rev to the nucleus. In the nucleus, the conversion from Ran-GDP to Ran-GTP dissociates Rev from KPNB1 and allows Rev's binding to the RRE in viral pre-mRNAs. Rev multimerization on the RRE via cooperative assembly exposes its nuclear export signal (NES) to the surface. Rev can then form a complex with XPO1/CRM1 and Ran-GTP, leading to nuclear export of the complex. Conversion from Ran-GTP to Ran-GDP mediates dissociation of the Rev/RRE/XPO1/RAN complex, so that Rev can return to the nucleus for a subsequent round of export. Beside KPNB1, also seems to interact with TNPO1/Transportin-1, RANBP5/IPO5 and IPO7/RANBP7 for nuclear import. The nucleoporin-like HRB/RIP is an essential cofactor that probably indirectly interacts with Rev to release HIV RNAs from the perinuclear region to the cytoplasm. In Homo sapiens (Human), this protein is Protein Rev.